We begin with the raw amino-acid sequence, 110 residues long: MTTPHSIAESTDPEVFPANNRHLTVSYASRYPEYTRIPAITLKGQWLEDAGFTTGTQVDVRVMNGCIVLTAQQPQPEESELMQSLRQVSKLSARKQKQVQAFIDVMAGSK.

The region spanning 29-74 (SRYPEYTRIPAITLKGQWLEDAGFTTGTQVDVRVMNGCIVLTAQQP) is the SpoVT-AbrB domain.

It belongs to the SymE family.

It localises to the cytoplasm. Functionally, involved in the degradation and recycling of damaged RNA. It is itself a target for degradation by the ATP-dependent protease Lon. The protein is Endoribonuclease SymE of Salmonella paratyphi C (strain RKS4594).